The sequence spans 319 residues: tRNA-cytidine(32) 2-sulfurtransferase (319 aa).

Positions 43-48 (SGGKDS) match the PP-loop motif motif. Residues C118, C121, and C209 each coordinate [4Fe-4S] cluster. The segment at 272 to 297 (DLAFDSEKMPERFSDGSEEDESEIKI) is disordered. The span at 276 to 286 (DSEKMPERFSD) shows a compositional bias: basic and acidic residues.

The protein belongs to the TtcA family. In terms of assembly, homodimer. Mg(2+) serves as cofactor. It depends on [4Fe-4S] cluster as a cofactor.

It localises to the cytoplasm. It carries out the reaction cytidine(32) in tRNA + S-sulfanyl-L-cysteinyl-[cysteine desulfurase] + AH2 + ATP = 2-thiocytidine(32) in tRNA + L-cysteinyl-[cysteine desulfurase] + A + AMP + diphosphate + H(+). The protein operates within tRNA modification. Its function is as follows. Catalyzes the ATP-dependent 2-thiolation of cytidine in position 32 of tRNA, to form 2-thiocytidine (s(2)C32). The sulfur atoms are provided by the cysteine/cysteine desulfurase (IscS) system. The sequence is that of tRNA-cytidine(32) 2-sulfurtransferase from Neisseria gonorrhoeae (strain ATCC 700825 / FA 1090).